The chain runs to 371 residues: Protein arginine N-methyltransferase 1 (371 aa).

Positions 50–361 (KDYYFDSYAH…DLDFKGQLCE (312 aa)) constitute an SAM-dependent MTase PRMT-type domain. The S-adenosyl-L-methionine site is built by histidine 63, arginine 72, glycine 96, and glutamate 118. Arginine 72 contacts S-adenosyl-L-homocysteine. Glutamate 118 serves as a coordination point for S-adenosyl-L-homocysteine. Position 134 is an N6-succinyllysine (lysine 134). Residue lysine 145 forms a Glycyl lysine isopeptide (Lys-Gly) (interchain with G-Cter in ubiquitin) linkage. 2 residues coordinate S-adenosyl-L-homocysteine: valine 146 and glutamate 147. Glutamate 147 contributes to the S-adenosyl-L-methionine binding site. Catalysis depends on residues glutamate 162 and glutamate 171. 2 positions are modified to N6-acetyllysine: lysine 228 and lysine 233. Serine 304 and serine 307 each carry phosphoserine.

Belongs to the class I-like SAM-binding methyltransferase superfamily. Protein arginine N-methyltransferase family. In terms of assembly, homodimer. Homooctamer; individual homodimers associates to form a homooctamer. Individual homodimers can associate to form a homohexamer. Heterodimer with PRMT8. Interacts with BTG1, BTG2, NFATC2IP and IFNAR1. Interacts with and methylates CHTOP, thereby enabling the interaction of CHTOP with the 5FMC complex. Interacts with ILF3 and SUPT5H. Interacts with and methylates FOXO1, leading to the nuclear retention of FOXO1 and the stimulation of FOXO1 transcriptional activity. Methylation of FOXO1 is increased upon oxidative stress. Interacts with and probably methylates ATXN2L. Component of the methylosome, a 20S complex containing at least CLNS1A/pICln, PRMT5/SKB1, WDR77/MEP50, PRMT1 and ERH. Interacts with DHX9 (via RGG region). Interacts (via N-terminus) with HABP4. Interacts with MAP3K5/ASK1; the interaction results in MAP3K5 methylation by PRMT1 which inhibits MAP3K5 activation. Interacts with TRIM48; the interaction results in ubiquitination of PRMT1 by TRIM48, leading to PRMT1 proteasomal degradation and activation of MAP3K5. Interacts with GATOR1 complex; this interaction is S-adenosyl-L-methionine (SAM) dependent and is perturbated by SAMTOR in a SAM-sensitive manner. Interacts with GFI1; promoting recognition and binding of MRE11 and TP53BP1 substrates by PRMT1. Post-translationally, polyubiquitinated at Lys-145 by the SCF(FBXL17) complex, leading to its subsequent degradation. Ubiquitination is regulated by acetylation at Lys-228 and Lys-233. Polyubiquitinated by E3 ubiquitin-protein ligase TRIM48, leading to suppression of MAP3K5/ASK1 methylation and subsequent MAP3K5 activation. In terms of processing, acetylation at Lys-228 and Lys-233 regulates ubiquitination by the SCF(FBXL17) complex. Acetylated at Lys-233 by p300/EP300. Deacetylated at Lys-228 and Lys-233 by SIRT1. Widely expressed. Expressed strongly in colorectal cancer cells (at protein level). Expressed strongly in colorectal cancer tissues compared to wild-type colon samples (at protein level). Expressed strongly in colorectal cancer tissues compared to wild-type colon samples.

Its subcellular location is the nucleus. It is found in the nucleoplasm. The protein localises to the cytoplasm. It localises to the cytosol. The protein resides in the lysosome membrane. It carries out the reaction L-arginyl-[protein] + 2 S-adenosyl-L-methionine = N(omega),N(omega)-dimethyl-L-arginyl-[protein] + 2 S-adenosyl-L-homocysteine + 2 H(+). The catalysed reaction is L-arginyl-[protein] + S-adenosyl-L-methionine = N(omega)-methyl-L-arginyl-[protein] + S-adenosyl-L-homocysteine + H(+). It catalyses the reaction N(omega)-methyl-L-arginyl-[protein] + S-adenosyl-L-methionine = N(omega),N(omega)-dimethyl-L-arginyl-[protein] + S-adenosyl-L-homocysteine + H(+). Its function is as follows. Arginine methyltransferase that methylates (mono and asymmetric dimethylation) the guanidino nitrogens of arginyl residues present in proteins such as ESR1, histone H2, H3 and H4, FMR1, ILF3, HNRNPA1, HNRNPD, NFATC2IP, SUPT5H, TAF15, EWS, HABP4, SERBP1, RBM15, FOXO1, CHTOP, MAP3K5/ASK1, MICU1 and NPRL2. Constitutes the main enzyme that mediates monomethylation and asymmetric dimethylation of histone H4 'Arg-3' (H4R3me1 and H4R3me2a, respectively), a specific tag for epigenetic transcriptional activation. May be involved in the regulation of TAF15 transcriptional activity, act as an activator of estrogen receptor (ER)-mediated transactivation, play a key role in neurite outgrowth and act as a negative regulator of megakaryocytic differentiation, by modulating p38 MAPK pathway. Methylates RBM15, promoting ubiquitination and degradation of RBM15. Methylates MRE11 and TP53BP1, promoting the DNA damage response. Methylates FOXO1 and retains it in the nucleus increasing its transcriptional activity. Methylates CHTOP and this methylation is critical for its 5-hydroxymethylcytosine (5hmC)-binding activity. Methylates MAP3K5/ASK1 at 'Arg-78' and 'Arg-80' which promotes association of MAP3K5 with thioredoxin and negatively regulates MAP3K5 association with TRAF2, inhibiting MAP3K5 stimulation and MAP3K5-induced activation of JNK. Methylates H4R3 in genes involved in glioblastomagenesis in a CHTOP- and/or TET1-dependent manner. Plays a role in regulating alternative splicing in the heart. Methylates NPRL2 at 'Arg-78' leading to inhibition of its GTPase activator activity and then the GATOR1 complex and consequently inducing timely mTORC1 activation under methionine-sufficient conditions. The chain is Protein arginine N-methyltransferase 1 from Homo sapiens (Human).